Reading from the N-terminus, the 275-residue chain is NH(3)-dependent NAD(+) synthetase (275 aa).

46–53 (GISGGQDS) provides a ligand contact to ATP. Asp52 is a Mg(2+) binding site. Arg140 is a binding site for deamido-NAD(+). Thr160 is a binding site for ATP. A Mg(2+)-binding site is contributed by Glu165. Deamido-NAD(+) is bound by residues Lys173 and Asp180. ATP-binding residues include Lys189 and Thr211. Position 260 to 261 (260 to 261 (HK)) interacts with deamido-NAD(+).

This sequence belongs to the NAD synthetase family. As to quaternary structure, homodimer.

It carries out the reaction deamido-NAD(+) + NH4(+) + ATP = AMP + diphosphate + NAD(+) + H(+). Its pathway is cofactor biosynthesis; NAD(+) biosynthesis; NAD(+) from deamido-NAD(+) (ammonia route): step 1/1. Catalyzes the ATP-dependent amidation of deamido-NAD to form NAD. Uses ammonia as a nitrogen source. This is NH(3)-dependent NAD(+) synthetase from Shigella boydii serotype 18 (strain CDC 3083-94 / BS512).